The sequence spans 196 residues: MNEAVSPGALSTLFTDARTHNGWRETPVSDETLREIYALMKWGPTSANCSPARIVFIRTAEGKERLRPALSSGNLQKTLTAPVTAIVAWDSEFYERLPQLFPHGDARSWFTSSPQLAEETAFRNSSMQAAYLIVACRALGLDTGPMSGFDRQHVDDAFFTGSTLKSNLLINIGYGDSSKLYARLPRLSFEEACGLL.

This sequence belongs to the nitroreductase family. HadB/RutE subfamily. The cofactor is FMN.

It catalyses the reaction 3-hydroxypropanoate + NADP(+) = 3-oxopropanoate + NADPH + H(+). Its function is as follows. May reduce toxic product malonic semialdehyde to 3-hydroxypropionic acid, which is excreted. In Escherichia coli O7:K1 (strain IAI39 / ExPEC), this protein is Probable malonic semialdehyde reductase RutE.